Here is a 272-residue protein sequence, read N- to C-terminus: Putative phosphatase BU028/BU029 (272 aa).

D8 (nucleophile) is an active-site residue. Residue D8 coordinates Mg(2+). A phosphate-binding site is contributed by L9. D10 is a binding site for Mg(2+). Phosphate-binding positions include 42–43 and K191; that span reads SG. Mg(2+) is bound at residue D214. N217 is a phosphate binding site.

Belongs to the HAD-like hydrolase superfamily. Cof family. It depends on Mg(2+) as a cofactor.

The polypeptide is Putative phosphatase BU028/BU029 (Buchnera aphidicola subsp. Acyrthosiphon pisum (strain APS) (Acyrthosiphon pisum symbiotic bacterium)).